The chain runs to 657 residues: Glycogen debranching enzyme (657 aa).

Asp-336 functions as the Nucleophile in the catalytic mechanism. Glu-371 functions as the Proton donor in the catalytic mechanism. Positions Ala-460–Lys-479 are disordered.

This sequence belongs to the glycosyl hydrolase 13 family.

It catalyses the reaction Hydrolysis of (1-&gt;6)-alpha-D-glucosidic linkages to branches with degrees of polymerization of three or four glucose residues in limit dextrin.. It functions in the pathway glycan degradation; glycogen degradation. Removes maltotriose and maltotetraose chains that are attached by 1,6-alpha-linkage to the limit dextrin main chain, generating a debranched limit dextrin. The protein is Glycogen debranching enzyme of Shigella dysenteriae serotype 1 (strain Sd197).